We begin with the raw amino-acid sequence, 514 residues long: MENLSERFNALQDQLMNIYEAAEQTLQAQIKHWQTLRKEPVLLYYAREKGVTRLGYQPVPVKAVSETKAKEAIAMVLQLESLQTSDFAHEPWTLVDTSIETFRSAPEGHFKKGPLPVEVIYDNDPDNANLYTMWTYVYYMDADDKWHKARSGVNHIGIYYLQGTFKNYYVLFADDAKRYGTTGEWEVKVNKETVFAPVTSSTPPGSPGGQADTNTTPATPTTSTTAVDSTSRQLTTSKQPQQTETRGRRYGRRPSSKSRRSQTQQRRSRSRHRSRSRSRSRSKSQTHTTRSTTRSRSTSLTKTRALTSRSRSRGRSPTTCRRGGGRSPRRRSRSPSTSSSCTTQRSQRARAESSTTRGARGSRGSRGGSRGGRGRRRGRSSSSSSPAHKRSRGGSAKLRGVSPGEVGGSLRSVSSKHTGRLGRLLEEARDPPVIIVKGAANTLKNVRNRAKIKYMGLFRSFSTTWSWVAGDGTERLGRPRMLISFSSYTQRRDFDEAVRYPKGVDKAYGNLDSL.

The segment at 1-201 (MENLSERFNA…ETVFAPVTSS (201 aa)) is transactivation domain. The segment at 197-424 (PVTSSTPPGS…SKHTGRLGRL (228 aa)) is disordered. The segment covering 199–231 (TSSTPPGSPGGQADTNTTPATPTTSTTAVDSTS) has biased composition (low complexity). Positions 232-244 (RQLTTSKQPQQTE) are enriched in polar residues. Over residues 248-284 (RRYGRRPSSKSRRSQTQQRRSRSRHRSRSRSRSRSKS) the composition is skewed to basic residues. Residues 285–321 (QTHTTRSTTRSRSTSLTKTRALTSRSRSRGRSPTTCR) show a composition bias toward low complexity. The span at 323 to 333 (GGGRSPRRRSR) shows a compositional bias: basic residues. The segment covering 334–346 (SPSTSSSCTTQRS) has biased composition (low complexity). Residues 430–514 (DPPVIIVKGA…DKAYGNLDSL (85 aa)) are DNA-binding domain. Residue K437 forms a Glycyl lysine isopeptide (Lys-Gly) (interchain with G-Cter in SUMO) linkage.

Belongs to the papillomaviridae E2 protein family. In terms of assembly, binds DNA as homodimer. Interacts with protein E1; this interaction greatly increases E1 DNA-binding activity. Interacts with protein L1; this interaction enhances E2-dependent replication and transcription activation. Interacts with protein L2; this interaction inhibits E2 transcriptional activity but not DNA replication function E2. Interacts with protein E7; this interaction inhibits E7 oncogenic activity. Interacts with host TAF1; this interaction modulates E2-dependent transcriptional regulation. Interacts with host BRD4; this interaction mediates E2 transcriptional activation function. Additionally, the interaction with host BRD4 on mitotic chromosomes mediates tethering of the viral genome. Interacts with host TOPBP1; this interaction is required for optimal viral DNA replication. Phosphorylated. In terms of processing, sumoylation plays a regulatory role in E2 transcriptional activity.

It is found in the host nucleus. Functionally, plays a role in the initiation of viral DNA replication. A dimer of E2 interacts with a dimer of E1 in order to improve specificity of E1 DNA binding activity. Once the complex recognizes and binds DNA at specific sites, the E2 dimer is removed from DNA. E2 also regulates viral transcription through binding to the E2RE response element (5'-ACCNNNNNNGGT-3') present in multiple copies in the regulatory regions of the viral genome. Activates or represses transcription depending on E2RE's position with regards to proximal promoter elements including the TATA-box. Repression occurs by sterically hindering the assembly of the transcription initiation complex. The sequence is that of Regulatory protein E2 from Homo sapiens (Human).